Consider the following 307-residue polypeptide: D-alanine--D-alanine ligase (307 aa).

The region spanning 101 to 301 (KTVMRAAGVS…FGELVRWMVE (201 aa)) is the ATP-grasp domain. 127-182 (PLTPPYVVKPIAEGSSMGVIIVRDERSHPPQILASDEWVYGEEVLAETYVAGRELT) contacts ATP. Asp-251, Glu-268, and Asn-270 together coordinate Mg(2+).

It belongs to the D-alanine--D-alanine ligase family. The cofactor is Mg(2+). It depends on Mn(2+) as a cofactor.

It localises to the cytoplasm. The catalysed reaction is 2 D-alanine + ATP = D-alanyl-D-alanine + ADP + phosphate + H(+). The protein operates within cell wall biogenesis; peptidoglycan biosynthesis. Functionally, cell wall formation. The protein is D-alanine--D-alanine ligase of Methylorubrum extorquens (strain PA1) (Methylobacterium extorquens).